Consider the following 334-residue polypeptide: HTH-type transcriptional repressor PurR (334 aa).

An HTH lacI-type domain is found at 2-56 (ATIKDVARLAGVSTTTVSHVINKTRFVAEATQEKVMKAVDELNYAPSAVARSLKC). The segment at residues 4-23 (IKDVARLAGVSTTTVSHVIN) is a DNA-binding region (H-T-H motif). A DNA-binding region spans residues 48–56 (SAVARSLKC). 4 residues coordinate hypoxanthine: F73, K189, F220, and D274.

In terms of assembly, homodimer.

It participates in purine metabolism; purine nucleotide biosynthesis [regulation]. Functionally, is the main repressor of the genes involved in the de novo synthesis of purine nucleotides, regulating purB, purC, purEK, purF, purHD, purL, purMN and guaBA expression. PurR is allosterically activated to bind its cognate DNA by binding the purine corepressors, hypoxanthine or guanine, thereby effecting transcription repression. The chain is HTH-type transcriptional repressor PurR from Vibrio parahaemolyticus serotype O3:K6 (strain RIMD 2210633).